A 461-amino-acid polypeptide reads, in one-letter code: Kynurenine 3-monooxygenase (461 aa).

Transmembrane regions (helical) follow at residues 395–415 (GFMNAIFPKSWIPLYSMVTFT) and 432–452 (ILSNLWKTTSTLALIGAAIGI).

This sequence belongs to the aromatic-ring hydroxylase family. KMO subfamily. The cofactor is FAD.

It localises to the mitochondrion. Its subcellular location is the membrane. The catalysed reaction is L-kynurenine + NADPH + O2 + H(+) = 3-hydroxy-L-kynurenine + NADP(+) + H2O. Its pathway is cofactor biosynthesis; NAD(+) biosynthesis; quinolinate from L-kynurenine: step 1/3. In terms of biological role, catalyzes the hydroxylation of L-kynurenine (L-Kyn) to form 3-hydroxy-L-kynurenine (L-3OHKyn). Required for synthesis of quinolinic acid. This Caenorhabditis briggsae protein is Kynurenine 3-monooxygenase.